The primary structure comprises 2052 residues: Unconventional myosin-X (2052 aa).

The residue at position 1 (methionine 1) is an N-acetylmethionine. The Myosin motor domain maps to 63–739; that stretch reads EGVDDMATLT…LEQKLEKRQE (677 aa). Residues asparagine 104, tyrosine 113, 160–165, and asparagine 215 contribute to the ATP site; that span reads GAGKTE. Positions 619–641 are actin-binding; that stretch reads LHSLMATLSASNPFFVRCIKPNM. 3 consecutive IQ domains span residues 742-763, 764-787, and 788-817; these read VTRAAMVIRAHVLGYLARKQYK, KVLDCVVIIQKNYRAFLLRRRFLH, and LKKAAVVFQKQLRGQIARRVYRQLLAEKRA. Residues 814–884 are SAH; sequence EKRAEEEKRK…LSRELEKQKE (71 aa). The segment at 819-843 is disordered; it reads EEKRKREEEEKRKREEEERERERER. A coiled-coil region spans residues 885–935; sequence NKQVEEILRLEKEIEDLQRMKERQELSLTEASLQKLQQLRDEELRRLEDEA. Phosphoserine occurs at positions 963 and 966. The tract at residues 964-1093 is disordered; it reads VGSGCTGEQG…DYDQDDYEDG (130 aa). The segment covering 988–1003 has biased composition (acidic residues); sequence PEEEEVDEGFEADDDA. The span at 1040–1049 shows a compositional bias: polar residues; it reads VVPTSPSADS. Residues 1081–1092 show a composition bias toward acidic residues; the sequence is GDYDYDQDDYED. Threonine 1152 is subject to Phosphothreonine. 2 PH domains span residues 1206 to 1304 and 1386 to 1491; these read EALK…QVHA and EFIV…NVTD. The MyTH4 domain occupies 1541–1689; the sequence is LPYGDINLNL…PSRDEIEALI (149 aa). The FERM domain maps to 1694-2038; sequence MTSTVHCHGG…AYISMIVKKR (345 aa).

The protein belongs to the TRAFAC class myosin-kinesin ATPase superfamily. Myosin family. Monomer, when in an inactive conformation in the cytosol. Homodimer in its active, membrane-bound conformation; antiparallel coiled coil-mediated dimer formation. Interacts with ECPAS. Interacts with NEO 1. Interacts with VASP. Interacts with DCC and ITGB5; the presence of DCC inhibits ITGB5 binding. Interacts with tubulin; ITGB5 or DCC binding inhibits tubulin binding. Interacts strongly with CALM3 and weakly with CALM, the CALM3 interaction is essential for function in filopodial extension and motility. Interacts with ITGB1, ITGB3 and ITGB5. Detected in kidney, testis, liver, kidney, cerebellum and brain cortex (at protein level).

It localises to the cytoplasm. The protein localises to the cytosol. Its subcellular location is the cell projection. It is found in the lamellipodium. The protein resides in the ruffle. It localises to the cytoskeleton. The protein localises to the filopodium tip. Its subcellular location is the cell cortex. It is found in the filopodium membrane. Myosins are actin-based motor molecules with ATPase activity. Unconventional myosins serve in intracellular movements. MYO10 binds to actin filaments and actin bundles and functions as a plus end-directed motor. Moves with higher velocity and takes larger steps on actin bundles than on single actin filaments. The tail domain binds to membranous compartments containing phosphatidylinositol 3,4,5-trisphosphate, which are then moved relative to actin filaments. Regulates cell shape, cell spreading and cell adhesion. Stimulates the formation and elongation of filopodia. In hippocampal neurons it induces the formation of dendritic filopodia by trafficking the actin-remodeling protein VASP to the tips of filopodia, where it promotes actin elongation. Plays a role in formation of the podosome belt in osteoclasts. This Bos taurus (Bovine) protein is Unconventional myosin-X (MYO10).